The chain runs to 280 residues: Large ribosomal subunit protein uL2 (280 aa).

Disordered regions lie at residues 29–58 and 225–280; these read PEKS…GGGH and VMNP…NKKR. Residues 45 to 58 are compositionally biased toward basic residues; it reads SHGHITTRHRGGGH. Over residues 253 to 269 the composition is skewed to basic and acidic residues; sequence KEGRTRKPKRYSDDMIV. Residues 270–280 show a composition bias toward basic residues; the sequence is RRRRANKNKKR.

This sequence belongs to the universal ribosomal protein uL2 family. In terms of assembly, part of the 50S ribosomal subunit. Forms a bridge to the 30S subunit in the 70S ribosome.

One of the primary rRNA binding proteins. Required for association of the 30S and 50S subunits to form the 70S ribosome, for tRNA binding and peptide bond formation. It has been suggested to have peptidyltransferase activity; this is somewhat controversial. Makes several contacts with the 16S rRNA in the 70S ribosome. The protein is Large ribosomal subunit protein uL2 of Corynebacterium glutamicum (strain R).